Here is a 532-residue protein sequence, read N- to C-terminus: Pentatricopeptide repeat-containing protein At5g66500, mitochondrial (532 aa).

Residues 1 to 33 constitute a mitochondrion transit peptide; it reads MFACLRIGRFIRLGNVTVKSTNLVLRCVFIRNF. PPR repeat units lie at residues 48–82, 83–117, 118–148, 149–183, 184–218, 223–248, 250–280, 281–314, 315–345, 346–380, 383–413, and 419–453; these read DLSS…SPDL, SSHT…GAET, GTIS…VEEK, DLVS…RVEI, SEFT…GRDL, TAMI…LNVH, DEVM…QRPN, VRVL…GFVS, DSKL…IPSK, SVVS…GSGV, NSVT…MKEK, and GTEH…DNQS. The interval 458–532 is type E motif; degenerate; that stretch reads IWVAVLSACS…VKTAGHSLFI (75 aa).

This sequence belongs to the PPR family. PCMP-E subfamily.

Its subcellular location is the mitochondrion. This chain is Pentatricopeptide repeat-containing protein At5g66500, mitochondrial (PCMP-E38), found in Arabidopsis thaliana (Mouse-ear cress).